Reading from the N-terminus, the 207-residue chain is Large ribosomal subunit protein uL4 (207 aa).

The tract at residues arginine 45–serine 80 is disordered. The segment covering glycine 60–glycine 71 has biased composition (basic residues).

It belongs to the universal ribosomal protein uL4 family. As to quaternary structure, part of the 50S ribosomal subunit.

Its function is as follows. One of the primary rRNA binding proteins, this protein initially binds near the 5'-end of the 23S rRNA. It is important during the early stages of 50S assembly. It makes multiple contacts with different domains of the 23S rRNA in the assembled 50S subunit and ribosome. In terms of biological role, forms part of the polypeptide exit tunnel. The polypeptide is Large ribosomal subunit protein uL4 (Oceanobacillus iheyensis (strain DSM 14371 / CIP 107618 / JCM 11309 / KCTC 3954 / HTE831)).